A 106-amino-acid chain; its full sequence is MLMTTTPTIEGRTIRSYHGVVAGEAIIGANVFKDMFAAVRDIVGGRSGSYEKTLRSARETAFEDLAEAAGRLGANAVVGVDIDYEVLGEKNGMLMVAVSGTAVTVE.

The protein belongs to the UPF0145 family.

The polypeptide is UPF0145 protein AZOSEA16190 (Aromatoleum aromaticum (strain DSM 19018 / LMG 30748 / EbN1) (Azoarcus sp. (strain EbN1))).